Reading from the N-terminus, the 316-residue chain is Pantothenate kinase (316 aa).

95 to 102 is an ATP binding site; it reads GSVAVGKS.

The protein belongs to the prokaryotic pantothenate kinase family.

It localises to the cytoplasm. It carries out the reaction (R)-pantothenate + ATP = (R)-4'-phosphopantothenate + ADP + H(+). It participates in cofactor biosynthesis; coenzyme A biosynthesis; CoA from (R)-pantothenate: step 1/5. This is Pantothenate kinase from Salmonella agona (strain SL483).